Reading from the N-terminus, the 888-residue chain is Bifunctional lysine-specific demethylase and histidyl-hydroxylase NO66 (888 aa).

Disordered stretches follow at residues 83–157 (AAAK…GSFS), 187–208 (SNNS…DSDA), and 261–446 (NSTS…NKLS). Over residues 98–108 (REKNIAKKQPE) the composition is skewed to basic and acidic residues. Residues 116 to 139 (ENVQKQLENGQENNGTLINLSNGK) are compositionally biased toward polar residues. The span at 192–207 (FDFDSDGDSNDFDDSD) shows a compositional bias: acidic residues. Positions 273 to 284 (VEPRKAAKRNEP) are enriched in basic and acidic residues. Residues 392–403 (KNKNNDNNNIDT) are compositionally biased toward low complexity. The segment covering 404-429 (NNKKDANNKKDANNNKDINNKKDANN) has biased composition (basic and acidic residues). The span at 430–444 (NKDTNNNKDNNNKNK) shows a compositional bias: low complexity. Residues 564–709 (CSIRILNPST…NLLEVLMPSV (146 aa)) form the JmjC domain. 3 residues coordinate Fe cation: H610, D612, and H675.

The protein belongs to the ROX family. NO66 subfamily. Fe(2+) serves as cofactor.

It localises to the nucleus. The catalysed reaction is N(6),N(6)-dimethyl-L-lysyl(36)-[histone H3] + 2 2-oxoglutarate + 2 O2 = L-lysyl(36)-[histone H3] + 2 formaldehyde + 2 succinate + 2 CO2. Functionally, oxygenase that can act as both a histone lysine demethylase and a ribosomal histidine hydroxylase. Specifically demethylates 'Lys-4' (H3K4me) and 'Lys-36' (H3K36me) of histone H3, thereby playing a central role in histone code. This chain is Bifunctional lysine-specific demethylase and histidyl-hydroxylase NO66, found in Drosophila mojavensis (Fruit fly).